The primary structure comprises 559 residues: Glucose-6-phosphate isomerase (559 aa).

The Proton donor role is filled by glutamate 352. Active-site residues include histidine 383 and lysine 511.

The protein belongs to the GPI family.

It is found in the cytoplasm. It carries out the reaction alpha-D-glucose 6-phosphate = beta-D-fructose 6-phosphate. It participates in carbohydrate biosynthesis; gluconeogenesis. It functions in the pathway carbohydrate degradation; glycolysis; D-glyceraldehyde 3-phosphate and glycerone phosphate from D-glucose: step 2/4. Its function is as follows. Catalyzes the reversible isomerization of glucose-6-phosphate to fructose-6-phosphate. The polypeptide is Glucose-6-phosphate isomerase (Chlorobium phaeobacteroides (strain DSM 266 / SMG 266 / 2430)).